We begin with the raw amino-acid sequence, 122 residues long: Small ribosomal subunit protein uS13 (122 aa).

The tract at residues Val-98 to Lys-122 is disordered.

It belongs to the universal ribosomal protein uS13 family. As to quaternary structure, part of the 30S ribosomal subunit. Forms a loose heterodimer with protein S19. Forms two bridges to the 50S subunit in the 70S ribosome.

In terms of biological role, located at the top of the head of the 30S subunit, it contacts several helices of the 16S rRNA. In the 70S ribosome it contacts the 23S rRNA (bridge B1a) and protein L5 of the 50S subunit (bridge B1b), connecting the 2 subunits; these bridges are implicated in subunit movement. Contacts the tRNAs in the A and P-sites. The sequence is that of Small ribosomal subunit protein uS13 from Nautilia profundicola (strain ATCC BAA-1463 / DSM 18972 / AmH).